A 270-amino-acid polypeptide reads, in one-letter code: Formamidopyrimidine-DNA glycosylase (270 aa).

Pro-2 serves as the catalytic Schiff-base intermediate with DNA. Glu-3 acts as the Proton donor in catalysis. The active-site Proton donor; for beta-elimination activity is the Lys-58. DNA contacts are provided by His-91, Arg-110, and Arg-151. An FPG-type zinc finger spans residues 236–270 (FVYGRGGEFCKVCGSTLREIRLGQRASVYCPRCQR). Residue Arg-260 is the Proton donor; for delta-elimination activity of the active site.

The protein belongs to the FPG family. In terms of assembly, monomer. Zn(2+) is required as a cofactor.

The enzyme catalyses Hydrolysis of DNA containing ring-opened 7-methylguanine residues, releasing 2,6-diamino-4-hydroxy-5-(N-methyl)formamidopyrimidine.. It carries out the reaction 2'-deoxyribonucleotide-(2'-deoxyribose 5'-phosphate)-2'-deoxyribonucleotide-DNA = a 3'-end 2'-deoxyribonucleotide-(2,3-dehydro-2,3-deoxyribose 5'-phosphate)-DNA + a 5'-end 5'-phospho-2'-deoxyribonucleoside-DNA + H(+). Its function is as follows. Involved in base excision repair of DNA damaged by oxidation or by mutagenic agents. Acts as a DNA glycosylase that recognizes and removes damaged bases. Has a preference for oxidized purines, such as 7,8-dihydro-8-oxoguanine (8-oxoG). Has AP (apurinic/apyrimidinic) lyase activity and introduces nicks in the DNA strand. Cleaves the DNA backbone by beta-delta elimination to generate a single-strand break at the site of the removed base with both 3'- and 5'-phosphates. The protein is Formamidopyrimidine-DNA glycosylase of Pseudomonas aeruginosa (strain LESB58).